The following is a 314-amino-acid chain: Homoserine O-succinyltransferase (314 aa).

Cys-142 functions as the Acyl-thioester intermediate in the catalytic mechanism. 2 residues coordinate substrate: Lys-163 and Ser-192. His-235 serves as the catalytic Proton acceptor. Glu-237 is a catalytic residue. Arg-249 contacts substrate.

This sequence belongs to the MetA family.

The protein resides in the cytoplasm. It catalyses the reaction L-homoserine + succinyl-CoA = O-succinyl-L-homoserine + CoA. The protein operates within amino-acid biosynthesis; L-methionine biosynthesis via de novo pathway; O-succinyl-L-homoserine from L-homoserine: step 1/1. Functionally, transfers a succinyl group from succinyl-CoA to L-homoserine, forming succinyl-L-homoserine. The polypeptide is Homoserine O-succinyltransferase (Shewanella frigidimarina (strain NCIMB 400)).